Reading from the N-terminus, the 489-residue chain is Serine/threonine-protein kinase dyf-5 (489 aa).

The Protein kinase domain maps to 11–291; that stretch reads YLMTKRLGDG…ANQSLRYKYF (281 aa). ATP-binding positions include 17 to 25 and K40; that span reads LGDGTFGEV. D132 serves as the catalytic Proton acceptor. Disordered stretches follow at residues 366-385 and 452-489; these read EKSD…KPTA and QTGP…KYVK. Low complexity predominate over residues 458–473; that stretch reads SNQTNNHSANNSHSPN.

This sequence belongs to the protein kinase superfamily. CMGC Ser/Thr protein kinase family. RCK subfamily. Requires Mg(2+) as cofactor. Expressed in head neurons including amphid and labial sensory neurons and 3 pairs of neurons in the tail including phasmid sensory neurons. In male, expressed in the tail including the sensory rays and the spicule.

Its subcellular location is the perikaryon. It localises to the cell projection. The protein resides in the dendrite. It is found in the axon. The protein localises to the cilium. It catalyses the reaction L-seryl-[protein] + ATP = O-phospho-L-seryl-[protein] + ADP + H(+). It carries out the reaction L-threonyl-[protein] + ATP = O-phospho-L-threonyl-[protein] + ADP + H(+). Serine/threonine-protein kinase which is required for ciliogenesis. Regulates the length and the morphology of sensory neuron cilia. In addition, plays a role in the anterograde intraflagellar transport (IFT) in the cilia by regulating the undocking of kinesin-II motor complex (composed of klp-11, klp-20 and kap-1) before reaching the distal segment and the docking of kinesin motor osm-3 onto IFT cargos. The protein is Serine/threonine-protein kinase dyf-5 of Caenorhabditis elegans.